We begin with the raw amino-acid sequence, 173 residues long: Photosystem I reaction center subunit XI (173 aa).

The next 2 helical transmembrane spans lie at 92–112 (LAGL…LSLY) and 148–168 (LIGG…LGII).

It belongs to the PsaL family.

Its subcellular location is the cellular thylakoid membrane. This chain is Photosystem I reaction center subunit XI, found in Nostoc punctiforme (strain ATCC 29133 / PCC 73102).